Here is a 338-residue protein sequence, read N- to C-terminus: Ketol-acid reductoisomerase (NADP(+)) (338 aa).

The region spanning 1–181 (MQVYYDKDAD…GGGRAGVIET (181 aa)) is the KARI N-terminal Rossmann domain. NADP(+) contacts are provided by residues 24–27 (YGSQ), arginine 47, serine 50, serine 52, and 82–85 (DEHQ). Histidine 107 is a catalytic residue. Glycine 133 is an NADP(+) binding site. The 146-residue stretch at 182-327 (SFREETETDL…ERLRGMMPWI (146 aa)) folds into the KARI C-terminal knotted domain. Residues aspartate 190, glutamate 194, glutamate 226, and glutamate 230 each contribute to the Mg(2+) site. Position 251 (serine 251) interacts with substrate.

This sequence belongs to the ketol-acid reductoisomerase family. Mg(2+) serves as cofactor.

It catalyses the reaction (2R)-2,3-dihydroxy-3-methylbutanoate + NADP(+) = (2S)-2-acetolactate + NADPH + H(+). The enzyme catalyses (2R,3R)-2,3-dihydroxy-3-methylpentanoate + NADP(+) = (S)-2-ethyl-2-hydroxy-3-oxobutanoate + NADPH + H(+). It participates in amino-acid biosynthesis; L-isoleucine biosynthesis; L-isoleucine from 2-oxobutanoate: step 2/4. It functions in the pathway amino-acid biosynthesis; L-valine biosynthesis; L-valine from pyruvate: step 2/4. In terms of biological role, involved in the biosynthesis of branched-chain amino acids (BCAA). Catalyzes an alkyl-migration followed by a ketol-acid reduction of (S)-2-acetolactate (S2AL) to yield (R)-2,3-dihydroxy-isovalerate. In the isomerase reaction, S2AL is rearranged via a Mg-dependent methyl migration to produce 3-hydroxy-3-methyl-2-ketobutyrate (HMKB). In the reductase reaction, this 2-ketoacid undergoes a metal-dependent reduction by NADPH to yield (R)-2,3-dihydroxy-isovalerate. This chain is Ketol-acid reductoisomerase (NADP(+)), found in Alkalilimnicola ehrlichii (strain ATCC BAA-1101 / DSM 17681 / MLHE-1).